Consider the following 296-residue polypeptide: Probable endonuclease 4 (296 aa).

Positions 68, 109, 144, 178, 181, 213, 226, 228, and 258 each coordinate Zn(2+).

Belongs to the AP endonuclease 2 family. Zn(2+) serves as cofactor.

The catalysed reaction is Endonucleolytic cleavage to 5'-phosphooligonucleotide end-products.. In terms of biological role, endonuclease IV plays a role in DNA repair. It cleaves phosphodiester bonds at apurinic or apyrimidinic (AP) sites, generating a 3'-hydroxyl group and a 5'-terminal sugar phosphate. The chain is Probable endonuclease 4 from Staphylococcus aureus (strain Mu3 / ATCC 700698).